Here is a 264-residue protein sequence, read N- to C-terminus: DNA-directed RNA polymerase subunit Rpo3 (264 aa).

[3Fe-4S] cluster is bound by residues Cys-203, Cys-206, and Cys-209.

This sequence belongs to the archaeal Rpo3/eukaryotic RPB3 RNA polymerase subunit family. As to quaternary structure, part of the RNA polymerase complex. It depends on [3Fe-4S] cluster as a cofactor.

The protein localises to the cytoplasm. It catalyses the reaction RNA(n) + a ribonucleoside 5'-triphosphate = RNA(n+1) + diphosphate. DNA-dependent RNA polymerase (RNAP) catalyzes the transcription of DNA into RNA using the four ribonucleoside triphosphates as substrates. This is DNA-directed RNA polymerase subunit Rpo3 from Archaeoglobus fulgidus (strain ATCC 49558 / DSM 4304 / JCM 9628 / NBRC 100126 / VC-16).